Reading from the N-terminus, the 449-residue chain is Capsid protein (449 aa).

The interval 1-43 (MARRARRPRGRFYSFRRGRWHHLKRLRRRYKFRHRRRQRYRRR) is DNA-binding. A nuclear localization signals region spans residues 6-47 (RRPRGRFYSFRRGRWHHLKRLRRRYKFRHRRRQRYRRRAFRK).

Belongs to the gyrovirus capsid protein family. Homomultimer (Potential). Interacts with Rep; this interaction relocates Rep into the nucleus.

It is found in the host nucleus. Its subcellular location is the virion. Its function is as follows. Self-assembles to form the virion icosahedral capsid with a T=1 symmetry. This very small capsid (25 nm in diameter) allows the virus to be very stable in the environment and resistant to some disinfectants, including detergents. Essential for the initial attachment to host receptors. After attachment, the virus is endocytosed and traffics to the nucleus. The capsid protein binds and transports the viral genome and Rep across the nuclear envelope. The chain is Capsid protein (VP1) from Gallus gallus (Chicken).